Consider the following 44-residue polypeptide: Protein Tat (44 aa).

The disordered stretch occupies residues 1–44 (APEDSQSHQVSLSKQPASQAGGDPTGPKESKKKVESETETDPVP). A compositionally biased stretch (polar residues) spans 7 to 18 (SHQVSLSKQPAS). Lys-14 participates in a covalent cross-link: Glycyl lysine isopeptide (Lys-Gly) (interchain with G-Cter in ubiquitin). The Cell attachment site signature appears at 21-23 (GGD). Residues 26-36 (GPKESKKKVES) are compositionally biased toward basic and acidic residues.

It belongs to the lentiviruses Tat family. In terms of assembly, interacts with host CCNT1. Associates with the P-TEFb complex composed at least of Tat, P-TEFb (CDK9 and CCNT1), TAR RNA, RNA Pol II. Recruits the HATs CREBBP, TAF1/TFIID, EP300, PCAF and GCN5L2. Interacts with host KAT5/Tip60; this interaction targets the latter to degradation. Interacts with the host deacetylase SIRT1. Interacts with host capping enzyme RNGTT; this interaction stimulates RNGTT. Binds to host KDR, and to the host integrins ITGAV/ITGB3 and ITGA5/ITGB1. Interacts with host KPNB1/importin beta-1 without previous binding to KPNA1/importin alpha-1. Interacts with EIF2AK2. Interacts with host nucleosome assembly protein NAP1L1; this interaction may be required for the transport of Tat within the nucleus, since the two proteins interact at the nuclear rim. Interacts with host C1QBP/SF2P32; this interaction involves lysine-acetylated Tat. Interacts with the host chemokine receptors CCR2, CCR3 and CXCR4. Interacts with host DPP4/CD26; this interaction may trigger an anti-proliferative effect. Interacts with host LDLR. Interacts with the host extracellular matrix metalloproteinase MMP1. Interacts with host PRMT6; this interaction mediates Tat's methylation. Interacts with, and is ubiquitinated by MDM2/Hdm2. Interacts with host PSMC3 and HTATIP2. Interacts with STAB1; this interaction may overcome SATB1-mediated repression of IL2 and IL2RA (interleukin) in T cells by binding to the same domain than HDAC1. Interacts (when acetylated) with human CDK13, thereby increasing HIV-1 mRNA splicing and promoting the production of the doubly spliced HIV-1 protein Nef. Post-translationally, acetylation by EP300, CREBBP, GCN5L2/GCN5 and PCAF regulates the transactivation activity of Tat. Phosphorylated by EIF2AK2 on serine and threonine residues adjacent to the basic region important for TAR RNA binding and function. Phosphorylation of Tat by EIF2AK2 is dependent on the prior activation of EIF2AK2 by dsRNA. In terms of processing, asymmetrical arginine methylation by host PRMT6 seems to diminish the transactivation capacity of Tat and affects the interaction with host CCNT1. Post-translationally, polyubiquitination by MDM2 does not target Tat to degradation, but activates its transactivation function and fosters interaction with CCNT1 and TAR RNA.

The protein localises to the host nucleus. It localises to the host nucleolus. It is found in the host cytoplasm. Its subcellular location is the secreted. In terms of biological role, transcriptional activator that increases RNA Pol II processivity, thereby increasing the level of full-length viral transcripts. Recognizes a hairpin structure at the 5'-LTR of the nascent viral mRNAs referred to as the transactivation responsive RNA element (TAR) and recruits the cyclin T1-CDK9 complex (P-TEFb complex) that will in turn hyperphosphorylate the RNA polymerase II to allow efficient elongation. The CDK9 component of P-TEFb and other Tat-activated kinases hyperphosphorylate the C-terminus of RNA Pol II that becomes stabilized and much more processive. Other factors such as HTATSF1/Tat-SF1, SUPT5H/SPT5, and HTATIP2 are also important for Tat's function. Besides its effect on RNA Pol II processivity, Tat induces chromatin remodeling of proviral genes by recruiting the histone acetyltransferases (HATs) CREBBP, EP300 and PCAF to the chromatin. This also contributes to the increase in proviral transcription rate, especially when the provirus integrates in transcriptionally silent region of the host genome. To ensure maximal activation of the LTR, Tat mediates nuclear translocation of NF-kappa-B by interacting with host RELA. Through its interaction with host TBP, Tat may also modulate transcription initiation. Tat can reactivate a latently infected cell by penetrating in it and transactivating its LTR promoter. In the cytoplasm, Tat is thought to act as a translational activator of HIV-1 mRNAs. Its function is as follows. Extracellular circulating Tat can be endocytosed by surrounding uninfected cells via the binding to several surface receptors such as CD26, CXCR4, heparan sulfate proteoglycans (HSPG) or LDLR. Neurons are rarely infected, but they internalize Tat via their LDLR. Endosomal low pH allows Tat to cross the endosome membrane to enter the cytosol and eventually further translocate into the nucleus, thereby inducing severe cell dysfunctions ranging from cell activation to cell death. Through its interaction with nuclear HATs, Tat is potentially able to control the acetylation-dependent cellular gene expression. Tat seems to inhibit the HAT activity of KAT5/Tip60 and TAF1, and consequently modify the expression of specific cellular genes. Modulates the expression of many cellular genes involved in cell survival, proliferation or in coding for cytokines (such as IL10) or cytokine receptors. May be involved in the derepression of host interleukin IL2 expression. Mediates the activation of cyclin-dependent kinases and dysregulation of microtubule network. Tat plays a role in T-cell and neurons apoptosis. Tat induced neurotoxicity and apoptosis probably contribute to neuroAIDS. Host extracellular matrix metalloproteinase MMP1 cleaves Tat and decreases Tat's mediated neurotoxicity. Circulating Tat also acts as a chemokine-like and/or growth factor-like molecule that binds to specific receptors on the surface of the cells, affecting many cellular pathways. In the vascular system, Tat binds to ITGAV/ITGB3 and ITGA5/ITGB1 integrins dimers at the surface of endothelial cells and competes with bFGF for heparin-binding sites, leading to an excess of soluble bFGF. Binds to KDR/VEGFR-2. All these Tat-mediated effects enhance angiogenesis in Kaposi's sarcoma lesions. This Human immunodeficiency virus type 1 group M subtype B (isolate BRVA) (HIV-1) protein is Protein Tat.